Reading from the N-terminus, the 165-residue chain is Ribosome maturation factor RimM (165 aa).

The region spanning 90–161 (EDEYFIVDLV…LITIRPSGEW (72 aa)) is the PRC barrel domain.

Belongs to the RimM family. As to quaternary structure, binds ribosomal protein uS19.

Its subcellular location is the cytoplasm. Its function is as follows. An accessory protein needed during the final step in the assembly of 30S ribosomal subunit, possibly for assembly of the head region. Essential for efficient processing of 16S rRNA. May be needed both before and after RbfA during the maturation of 16S rRNA. It has affinity for free ribosomal 30S subunits but not for 70S ribosomes. The chain is Ribosome maturation factor RimM from Clostridium perfringens (strain SM101 / Type A).